The chain runs to 185 residues: Protein E3 homolog (185 aa).

Residues 7–73 enclose the Z-binding domain; the sequence is TVNDAEIFSL…SNPPKWFKNY (67 aa). The 68-residue stretch at 112 to 179 folds into the DRBM domain; it reads NPCIVLNEYC…SKITMDEILD (68 aa).

This sequence belongs to the poxviridae E3 protein family.

Functionally, RNA-binding protein that plays a role in the inhibition of multiple cellular antiviral responses activated by double-stranded RNA (dsRNA), such as inhibition of PKR activation, necroptosis, and IFN-mediated antiviral activities. Recognizes and binds Z-RNA structures via its Z-binding domain and dsRNA via its DRBM domain: RNA-binding activity is required to escape host ZBP1-dependent necroptosis. Mechanistically, the Z-binding domain binds Z-RNAs that are produced during Yaba-like disease virus infection, thereby competing with Z-RNA detection by host ZBP1, suppressing ZBP1-dependent necroptosis. The protein is Protein E3 homolog of Yaba-like disease virus (YLDV).